The sequence spans 265 residues: HTH-type transcriptional activator CfaD (265 aa).

One can recognise an HTH araC/xylS-type domain in the interval 164–261 (DKVRNVIEKD…GVTPKQFFTY (98 aa)). 2 DNA-binding regions (H-T-H motif) span residues 181 to 202 (GIIA…ESEN) and 228 to 251 (ISQI…NKHY).

Homodimer.

Transcriptional activator of the CFA/I adhesin (cfaA and cfaB) genes of enterotoxigenic E.coli at 37 degrees Celsius. Also represses the silencing effect of H-NS (hns). This is HTH-type transcriptional activator CfaD from Escherichia coli.